The chain runs to 207 residues: Inner membrane-spanning protein YciB (207 aa).

6 helical membrane passes run 3–23, 51–71, 78–98, 105–125, 150–170, and 178–198; these read FLFD…AEGQ, VLLA…WLLL, TMLW…VWFH, WKPS…HAVF, FMWI…AYSF, and FKLF…GLYL.

This sequence belongs to the YciB family.

It localises to the cell inner membrane. Its function is as follows. Plays a role in cell envelope biogenesis, maintenance of cell envelope integrity and membrane homeostasis. This chain is Inner membrane-spanning protein YciB, found in Methylibium petroleiphilum (strain ATCC BAA-1232 / LMG 22953 / PM1).